Here is a 129-residue protein sequence, read N- to C-terminus: Glycine cleavage system H protein (129 aa).

The region spanning 23–104 (SVTVGITQHA…CYAAWLFKLK (82 aa)) is the Lipoyl-binding domain. Lysine 64 is modified (N6-lipoyllysine).

It belongs to the GcvH family. The glycine cleavage system is composed of four proteins: P, T, L and H. Requires (R)-lipoate as cofactor.

In terms of biological role, the glycine cleavage system catalyzes the degradation of glycine. The H protein shuttles the methylamine group of glycine from the P protein to the T protein. This Nitrosomonas europaea (strain ATCC 19718 / CIP 103999 / KCTC 2705 / NBRC 14298) protein is Glycine cleavage system H protein.